The primary structure comprises 165 residues: Crossover junction endodeoxyribonuclease RuvC (165 aa).

Residues aspartate 6, glutamate 67, and aspartate 142 contribute to the active site. Mg(2+) is bound by residues aspartate 6, glutamate 67, and aspartate 142.

This sequence belongs to the RuvC family. Homodimer which binds Holliday junction (HJ) DNA. The HJ becomes 2-fold symmetrical on binding to RuvC with unstacked arms; it has a different conformation from HJ DNA in complex with RuvA. In the full resolvosome a probable DNA-RuvA(4)-RuvB(12)-RuvC(2) complex forms which resolves the HJ. The cofactor is Mg(2+).

The protein localises to the cytoplasm. The catalysed reaction is Endonucleolytic cleavage at a junction such as a reciprocal single-stranded crossover between two homologous DNA duplexes (Holliday junction).. The RuvA-RuvB-RuvC complex processes Holliday junction (HJ) DNA during genetic recombination and DNA repair. Endonuclease that resolves HJ intermediates. Cleaves cruciform DNA by making single-stranded nicks across the HJ at symmetrical positions within the homologous arms, yielding a 5'-phosphate and a 3'-hydroxyl group; requires a central core of homology in the junction. The consensus cleavage sequence is 5'-(A/T)TT(C/G)-3'. Cleavage occurs on the 3'-side of the TT dinucleotide at the point of strand exchange. HJ branch migration catalyzed by RuvA-RuvB allows RuvC to scan DNA until it finds its consensus sequence, where it cleaves and resolves the cruciform DNA. This Chlamydia abortus (strain DSM 27085 / S26/3) (Chlamydophila abortus) protein is Crossover junction endodeoxyribonuclease RuvC.